A 288-amino-acid polypeptide reads, in one-letter code: Solute carrier family 25 member 45 (288 aa).

Solcar repeat units follow at residues 1–83, 97–191, and 199–286; these read MPVE…TLLV, PSYM…LCRQ, and PSSA…LLRW. Transmembrane regions (helical) follow at residues 6 to 26, 63 to 83, 100 to 120, 166 to 186, 202 to 222, and 266 to 286; these read FVAG…FDTV, IASI…TLLV, MHIF…LAPF, GAWA…ITYE, ATVL…ATPL, and SARA…LLRW.

It belongs to the mitochondrial carrier (TC 2.A.29) family.

The protein resides in the mitochondrion inner membrane. In Homo sapiens (Human), this protein is Solute carrier family 25 member 45 (SLC25A45).